We begin with the raw amino-acid sequence, 533 residues long: Adenylate kinase 7 (533 aa).

An adenylate kinase region spans residues 177-426 (PVKICILGPP…EPRNYGLTDE (250 aa)). Residue 187 to 192 (AVGKSS) participates in ATP binding. Residues 207–265 (QLKDVISEAIAKLETIVAPKDIGEGKEEVEEEEEEENVEDAQELLDGIKESMEQNAGQL) are NMP. Residues 242-265 (ENVE…AGQL), 292-295 (GFPK), and glutamine 299 contribute to the AMP site. Residues 347–357 (NLPERIVAGTH) form an LID region. Position 365 (arginine 365) interacts with AMP. Glycine 397 provides a ligand contact to ATP. The stretch at 419–487 (RNYGLTDEEK…EERELLEAQS (69 aa)) forms a coiled coil. The DPY-30 stretch occupies residues 489-533 (PLRNYLMTYVMPTLIQGLNECCNVRPEDPVDFLAEYLFKNNPEAQ).

This sequence in the central section; belongs to the adenylate kinase family. In the C-terminal section; belongs to the dpy-30 family.

It is found in the cytoplasm. Its subcellular location is the cytosol. The protein localises to the cell projection. It localises to the cilium. The protein resides in the flagellum. It carries out the reaction AMP + ATP = 2 ADP. The catalysed reaction is a 2'-deoxyribonucleoside 5'-diphosphate + ATP = a 2'-deoxyribonucleoside 5'-triphosphate + ADP. The enzyme catalyses a ribonucleoside 5'-diphosphate + ATP = a ribonucleoside 5'-triphosphate + ADP. Its function is as follows. Nucleoside monophosphate (NMP) kinase that catalyzes the reversible transfer of the terminal phosphate group between nucleoside triphosphates and monophosphates. Has highest activity toward AMP, and weaker activity toward dAMP, CMP and dCMP. Also displays broad nucleoside diphosphate kinase activity. Involved in maintaining ciliary structure and function. The chain is Adenylate kinase 7 (AK7) from Macaca fascicularis (Crab-eating macaque).